The sequence spans 585 residues: Glycerol-3-phosphate dehydrogenase 2 (585 aa).

37-65 provides a ligand contact to FAD; sequence DVVVIGGGVVGSGCALDAATRGLKVALVE.

The protein belongs to the FAD-dependent glycerol-3-phosphate dehydrogenase family. It depends on FAD as a cofactor.

The protein resides in the cytoplasm. The enzyme catalyses a quinone + sn-glycerol 3-phosphate = dihydroxyacetone phosphate + a quinol. This chain is Glycerol-3-phosphate dehydrogenase 2 (glpD2), found in Mycobacterium bovis (strain ATCC BAA-935 / AF2122/97).